The primary structure comprises 34 residues: U4-theraphotoxin-Hs1a (34 aa).

Intrachain disulfides connect Cys3–Cys17, Cys10–Cys22, and Cys16–Cys33.

Belongs to the neurotoxin 14 (magi-1) family. 05 (ICK-7) subfamily. In terms of tissue distribution, expressed by the venom gland.

It is found in the secreted. In terms of biological role, intracisternal injection paralyzes mice. The sequence is that of U4-theraphotoxin-Hs1a from Cyriopagopus schmidti (Chinese bird spider).